The following is a 312-amino-acid chain: Mas-related G-protein coupled receptor member B3 (312 aa).

The Extracellular segment spans residues M1–N31. Residues L32–L52 traverse the membrane as a helical segment. At G53 to N67 the chain is on the cytoplasmic side. The helical transmembrane segment at L68 to C88 threads the bilayer. Topologically, residues K89–M106 are extracellular. The chain crosses the membrane as a helical span at residues F107–I127. Residues M128 to H140 lie on the Cytoplasmic side of the membrane. The helical transmembrane segment at T141 to M161 threads the bilayer. At E162–N180 the chain is on the extracellular side. A helical transmembrane segment spans residues I181–L201. Residues L202 to T220 lie on the Cytoplasmic side of the membrane. Residues I221–V241 traverse the membrane as a helical segment. Residues D242 to H259 are Extracellular-facing. A helical transmembrane segment spans residues I260–S280. The Cytoplasmic portion of the chain corresponds to I281 to P312.

Belongs to the G-protein coupled receptor 1 family. Mas subfamily.

It is found in the membrane. Its function is as follows. Orphan receptor. Probably involved in the function of nociceptive neurons. May regulate nociceptor function and/or development, including the sensation or modulation of pain. This Mus musculus (Mouse) protein is Mas-related G-protein coupled receptor member B3 (Mrgprb3).